We begin with the raw amino-acid sequence, 315 residues long: WD repeat domain-containing protein 83 (315 aa).

WD repeat units follow at residues 23-62 (CGQGAVRAVRFNVDGNYCLTCGSDKTLKLWNPLRGTLLRT), 65-104 (GHGYEVLDAAGSFDNSSLCSGGGDKAVVLWDVASGQVVRK), 107-146 (GHAGKVNTVQFNEEATVILSGSIDSSIRCWDCRSRRPEPV), 151-188 (EARDGVSSVKVSDHEILAGSVDGRVRRYDLRMGQLFSD), 190-228 (VGSPITCTCFSRDGQCTLVSSLDSTLRLLDKDTGELLGE), 231-272 (GHKN…LALA), and 275-313 (VGSGVVQSLAYHPTEPCLLTAMGGSVQCWREEAYEAEDG).

The protein belongs to the WD repeat MORG1 family. In terms of assembly, interacts with EGLN3/PHD3. Interacts with ERK signaling proteins MAP2K1/MEK1, MAP2K2/MEK2, LAMTOR3, ARAF/Raf-1, MAPK1/ERK2 and MAPK3/ERK1. Identified in the spliceosome C complex. Interacts with PARD6B and CRB3. Interacts strongly with GTP-bound RRAGA but not with inactive GDP-bound. Interacts with p62/SQSTM1.

The protein resides in the cytoplasm. Its subcellular location is the lysosome. It is found in the nucleus. Functionally, molecular scaffold protein for various multimeric protein complexes. Acts as a module in the assembly of a multicomponent scaffold for the ERK pathway, linking ERK responses to specific agonists. At low concentrations it enhances ERK activation, whereas high concentrations lead to the inhibition of ERK activation. Also involved in response to hypoxia by acting as a negative regulator of HIF1A/HIF-1-alpha via its interaction with EGLN3/PHD3. May promote degradation of HIF1A. May act by recruiting signaling complexes to a specific upstream activator. May also be involved in pre-mRNA splicing. Participates in tight junction development by regulating apico-basal polarity, a key step in tissue development and organization. Mechanistically, regulates the translocation of PAR6-aPKC from the cytoplasm to the apical surface by acting as an adapter between PARD6B AND CRB3. Also acts as a negative regulator of mTORC1 under nutrient-rich conditions by binding to the active Rag GTPases to inhibit mTORC1 localization to the lysosome and phosphorylation of downstream targets. This facilitates constitutive basal autophagy during nutrient availability. The chain is WD repeat domain-containing protein 83 (WDR83) from Homo sapiens (Human).